Consider the following 155-residue polypeptide: Putative pre-16S rRNA nuclease (155 aa).

The protein belongs to the YqgF nuclease family.

The protein resides in the cytoplasm. In terms of biological role, could be a nuclease involved in processing of the 5'-end of pre-16S rRNA. The sequence is that of Putative pre-16S rRNA nuclease from Wolbachia sp. subsp. Drosophila simulans (strain wRi).